The following is a 95-amino-acid chain: Protein TusB (95 aa).

Belongs to the DsrH/TusB family. As to quaternary structure, heterohexamer, formed by a dimer of trimers. The hexameric TusBCD complex contains 2 copies each of TusB, TusC and TusD. The TusBCD complex interacts with TusE.

The protein localises to the cytoplasm. Part of a sulfur-relay system required for 2-thiolation of 5-methylaminomethyl-2-thiouridine (mnm(5)s(2)U) at tRNA wobble positions. This is Protein TusB from Shigella flexneri.